Here is a 374-residue protein sequence, read N- to C-terminus: tRNA-specific 2-thiouridylase MnmA (374 aa).

ATP-binding positions include 12–19 and Met38; that span reads GMSGGVDS. The interval 98–100 is interaction with target base in tRNA; the sequence is NPD. Residue Cys103 is the Nucleophile of the active site. Cys103 and Cys202 are oxidised to a cystine. Gly128 contributes to the ATP binding site. The tract at residues 152–154 is interaction with tRNA; that stretch reads KDQ. The Cysteine persulfide intermediate role is filled by Cys202. Positions 316–317 are interaction with tRNA; sequence RY.

It belongs to the MnmA/TRMU family.

It localises to the cytoplasm. It carries out the reaction S-sulfanyl-L-cysteinyl-[protein] + uridine(34) in tRNA + AH2 + ATP = 2-thiouridine(34) in tRNA + L-cysteinyl-[protein] + A + AMP + diphosphate + H(+). In terms of biological role, catalyzes the 2-thiolation of uridine at the wobble position (U34) of tRNA, leading to the formation of s(2)U34. This chain is tRNA-specific 2-thiouridylase MnmA, found in Vibrio vulnificus (strain YJ016).